A 309-amino-acid chain; its full sequence is Electron transfer flavoprotein subunit alpha (309 aa).

253–281 provides a ligand contact to FAD; it reads LYIAVGISGAIQHLAGMKDSKVIVAINKD.

It belongs to the ETF alpha-subunit/FixB family. Heterodimer of an alpha and a beta subunit. The cofactor is FAD.

The electron transfer flavoprotein serves as a specific electron acceptor for other dehydrogenases. It transfers the electrons to the main respiratory chain via ETF-ubiquinone oxidoreductase (ETF dehydrogenase). This Pseudomonas aeruginosa (strain ATCC 15692 / DSM 22644 / CIP 104116 / JCM 14847 / LMG 12228 / 1C / PRS 101 / PAO1) protein is Electron transfer flavoprotein subunit alpha (etfA).